The primary structure comprises 357 residues: U5 small nuclear ribonucleoprotein 40 kDa protein (357 aa).

Residue Lys18 forms a Glycyl lysine isopeptide (Lys-Gly) (interchain with G-Cter in SUMO2) linkage. Residue Arg21 is modified to Asymmetric dimethylarginine. WD repeat units follow at residues 64 to 103 (GHEG…DNYA), 107 to 146 (GHSG…RVKR), 149 to 189 (GHTS…AIQT), 191 to 230 (QNTY…LTYT), 233 to 272 (GHAD…PKER), 283 to 322 (NFEK…ILYK), and 325 to 357 (GHAG…GEIQ). Lys270 participates in a covalent cross-link: Glycyl lysine isopeptide (Lys-Gly) (interchain with G-Cter in SUMO2).

Component of the pre-catalytic and catalytic spliceosome complexes. Component of the postcatalytic spliceosome P complex. Part of the U5 snRNP complex. Interacts with PRPF8. Component of the U4/U6-U5 tri-snRNP complex composed of the U4, U6 and U5 snRNAs and at least PRPF3, PRPF4, PRPF6, PRPF8, PRPF31, SNRNP200, TXNL4A, WDR57, SNRNP40, DDX23, CD2BP2, PPIH, SNU13, EFTUD2, SART1 and USP39. Component of the minor spliceosome, which splices U12-type introns.

It localises to the nucleus. Functionally, required for pre-mRNA splicing as component of the activated spliceosome. Component of the U5 small nuclear ribonucleoprotein (snRNP) complex and the U4/U6-U5 tri-snRNP complex, building blocks of the spliceosome. As a component of the minor spliceosome, involved in the splicing of U12-type introns in pre-mRNAs. This chain is U5 small nuclear ribonucleoprotein 40 kDa protein (SNRNP40), found in Homo sapiens (Human).